The chain runs to 332 residues: L-lactate dehydrogenase A chain (332 aa).

NAD(+)-binding positions include 29–57 (GMVG…MEDK) and Arg-99. Arg-106, Asn-138, and Arg-169 together coordinate substrate. Asn-138 is a binding site for NAD(+). His-193 functions as the Proton acceptor in the catalytic mechanism. Position 248 (Thr-248) interacts with substrate.

Belongs to the LDH/MDH superfamily. LDH family. Homotetramer.

It localises to the cytoplasm. It carries out the reaction (S)-lactate + NAD(+) = pyruvate + NADH + H(+). It participates in fermentation; pyruvate fermentation to lactate; (S)-lactate from pyruvate: step 1/1. Interconverts simultaneously and stereospecifically pyruvate and lactate with concomitant interconversion of NADH and NAD(+). In Eleginops maclovinus (Patagonian blennie), this protein is L-lactate dehydrogenase A chain (ldha).